Reading from the N-terminus, the 394-residue chain is Chalcone synthase 8 (394 aa).

Cys-165 is an active-site residue.

Belongs to the thiolase-like superfamily. Chalcone/stilbene synthases family.

The catalysed reaction is (E)-4-coumaroyl-CoA + 3 malonyl-CoA + 3 H(+) = 2',4,4',6'-tetrahydroxychalcone + 3 CO2 + 4 CoA. It participates in secondary metabolite biosynthesis; flavonoid biosynthesis. Its function is as follows. The primary product of this enzyme is 4,2',4',6'-tetrahydroxychalcone (also termed naringenin-chalcone or chalcone) which can under specific conditions spontaneously isomerize into naringenin. This is Chalcone synthase 8 (CHS8) from Bromheadia finlaysoniana (Orchid).